Reading from the N-terminus, the 269-residue chain is Indole-3-glycerol phosphate synthase (269 aa).

The protein belongs to the TrpC family.

The enzyme catalyses 1-(2-carboxyphenylamino)-1-deoxy-D-ribulose 5-phosphate + H(+) = (1S,2R)-1-C-(indol-3-yl)glycerol 3-phosphate + CO2 + H2O. It functions in the pathway amino-acid biosynthesis; L-tryptophan biosynthesis; L-tryptophan from chorismate: step 4/5. The polypeptide is Indole-3-glycerol phosphate synthase (Roseiflexus sp. (strain RS-1)).